Consider the following 262-residue polypeptide: Probable aminoglycoside 3'-phosphotransferase (262 aa).

D187 acts as the Proton acceptor in catalysis.

It belongs to the aminoglycoside phosphotransferase family.

It carries out the reaction kanamycin A + ATP = kanamycin 3'-phosphate + ADP + H(+). The polypeptide is Probable aminoglycoside 3'-phosphotransferase (ymdC) (Lactococcus lactis subsp. lactis (strain IL1403) (Streptococcus lactis)).